We begin with the raw amino-acid sequence, 299 residues long: CDP-abequose synthase (299 aa).

A substrate-binding site is contributed by Thr117. Tyr134 (proton acceptor) is an active-site residue.

This sequence belongs to the NAD(P)-dependent epimerase/dehydratase family.

The catalysed reaction is CDP-alpha-D-abequose + NADP(+) = CDP-4-dehydro-3,6-dideoxy-alpha-D-glucose + NADPH + H(+). It participates in bacterial outer membrane biogenesis; LPS O-antigen biosynthesis. This is CDP-abequose synthase (rfbJ) from Salmonella typhimurium (strain LT2 / SGSC1412 / ATCC 700720).